The primary structure comprises 617 residues: ATP-dependent RNA helicase DBP1 (617 aa).

Residues 1-90 (MADLPQKVSN…TSANYNRGGS (90 aa)) are disordered. Residues 7-17 (KVSNLSINNKE) show a composition bias toward polar residues. Residues 38–58 (PSFERSTPKQEDKVTGGDFFR) show a composition bias toward basic and acidic residues. Over residues 79 to 90 (GGTSANYNRGGS) the composition is skewed to polar residues. A Q motif motif is present at residues 154 to 182 (LDFSSPPLDELLMENIKLASFTKPTPVQK). Residues 185–374 (IPIVTKGRDL…RDFLDNYIFL (190 aa)) form the Helicase ATP-binding domain. Residue 198–205 (AQTGSGKT) participates in ATP binding. The short motif at 318–321 (DEAD) is the DEAD box element. Residues 385–545 (NITQRILYVD…EVPTFLSDLS (161 aa)) enclose the Helicase C-terminal domain. Positions 542–617 (SDLSRQNSRG…GYGNSNASWW (76 aa)) are disordered. The segment covering 580 to 594 (FGSTRPRNTGTSNWG) has biased composition (polar residues).

The protein belongs to the DEAD box helicase family. DDX3/DED1 subfamily.

It is found in the cytoplasm. It catalyses the reaction ATP + H2O = ADP + phosphate + H(+). Its function is as follows. ATP-binding RNA helicase involved in translation initiation. Remodels RNA in response to ADP and ATP concentrations by facilitating disruption, but also formation of RNA duplexes. Redundant to DED1, may be required in conditions in which DED1 expression is decreased. In Saccharomyces cerevisiae (strain YJM789) (Baker's yeast), this protein is ATP-dependent RNA helicase DBP1 (DBP1).